Here is a 65-residue protein sequence, read N- to C-terminus: Large ribosomal subunit protein bL33m (65 aa).

The transit peptide at 1–8 (MLLSAVSF) directs the protein to the mitochondrion.

Belongs to the bacterial ribosomal protein bL33 family. Component of the mitochondrial ribosome large subunit (39S) which comprises a 16S rRNA and about 50 distinct proteins.

Its subcellular location is the mitochondrion. This is Large ribosomal subunit protein bL33m (Mrpl33) from Mus musculus (Mouse).